A 163-amino-acid chain; its full sequence is MSDPSFDVVSEISRPELTNAVTQALGEIKNRFDFKGSKSDIQLEDEQLVLTSDNEAKLESVIDVLVSKMAKRGLGLKNFDFKSKIEPATGGTVRMKVKIRKGMEKEQTKEVTRIVKESKLKVNATIMGECVRITGKKKDDLQEVIHLLKNSDLPFDVQFTNYK.

It belongs to the YajQ family.

Functionally, nucleotide-binding protein. The polypeptide is Nucleotide-binding protein LA_3406 (Leptospira interrogans serogroup Icterohaemorrhagiae serovar Lai (strain 56601)).